Here is a 268-residue protein sequence, read N- to C-terminus: Protein MGF 300-1L (268 aa).

Residues 1 to 175 (MVSLTTYCLK…QTFKTFYAKN (175 aa)) lie on the Cytoplasmic side of the membrane. The chain crosses the membrane as a helical span at residues 176 to 193 (YSLSTLYCIFLAIYYKLY). The Extracellular portion of the chain corresponds to 194–268 (MALRKMVKIY…MYAFSQNNFW (75 aa)).

This sequence belongs to the asfivirus MGF 300 family.

It localises to the host membrane. Plays a role in virus cell tropism, and may be required for efficient virus replication in macrophages. This chain is Protein MGF 300-1L, found in African swine fever virus (isolate Tick/Malawi/Lil 20-1/1983) (ASFV).